The sequence spans 201 residues: Small ribosomal subunit protein uS4c (201 aa).

Positions 89–150 (MRLDNILFRL…KQRSKVLIQN (62 aa)) constitute an S4 RNA-binding domain.

This sequence belongs to the universal ribosomal protein uS4 family. Part of the 30S ribosomal subunit. Contacts protein S5. The interaction surface between S4 and S5 is involved in control of translational fidelity.

Its subcellular location is the plastid. It is found in the chloroplast. In terms of biological role, one of the primary rRNA binding proteins, it binds directly to 16S rRNA where it nucleates assembly of the body of the 30S subunit. Its function is as follows. With S5 and S12 plays an important role in translational accuracy. The protein is Small ribosomal subunit protein uS4c (rps4) of Acorus calamus (Sweet flag).